A 59-amino-acid polypeptide reads, in one-letter code: UPF0391 membrane protein GbCGDNIH1_2123 (59 aa).

A run of 2 helical transmembrane segments spans residues 6–26 (LALF…TGIS) and 35–55 (ILFV…LAAG).

The protein belongs to the UPF0391 family.

Its subcellular location is the cell membrane. In Granulibacter bethesdensis (strain ATCC BAA-1260 / CGDNIH1), this protein is UPF0391 membrane protein GbCGDNIH1_2123.